We begin with the raw amino-acid sequence, 324 residues long: 2,3,4,5-tetrahydropyridine-2,6-dicarboxylate N-succinyltransferase (324 aa).

Residues Asp173 and Glu190 each coordinate Mg(2+). The active-site Acyl-anhydride intermediate is the Glu206. Succinyl-CoA contacts are provided by residues Arg208, Gly223, Ser226, Ala249, 264-265, Gly272, Lys284, and 297-300; these read EA and RRNS.

It belongs to the type 2 tetrahydrodipicolinate N-succinyltransferase family. As to quaternary structure, homotrimer.

The protein localises to the cytoplasm. The catalysed reaction is (S)-2,3,4,5-tetrahydrodipicolinate + succinyl-CoA + H2O = (S)-2-succinylamino-6-oxoheptanedioate + CoA. It participates in amino-acid biosynthesis; L-lysine biosynthesis via DAP pathway; LL-2,6-diaminopimelate from (S)-tetrahydrodipicolinate (succinylase route): step 1/3. Its function is as follows. Catalyzes the conversion of the cyclic tetrahydrodipicolinate (THDP) into the acyclic N-succinyl-L-2-amino-6-oxopimelate using succinyl-CoA. This Geodermatophilus obscurus (strain ATCC 25078 / DSM 43160 / JCM 3152 / CCUG 61914 / KCC A-0152 / KCTC 9177 / NBRC 13315 / NRRL B-3577 / G-20) protein is 2,3,4,5-tetrahydropyridine-2,6-dicarboxylate N-succinyltransferase.